The primary structure comprises 729 residues: Catalase-peroxidase (729 aa).

The tryptophyl-tyrosyl-methioninium (Trp-Tyr) (with M-243) cross-link spans W95 to Y217. H96 functions as the Proton acceptor in the catalytic mechanism. Residues Y217–M243 constitute a cross-link (tryptophyl-tyrosyl-methioninium (Tyr-Met) (with W-95)). H258 serves as a coordination point for heme b.

This sequence belongs to the peroxidase family. Peroxidase/catalase subfamily. Homodimer or homotetramer. It depends on heme b as a cofactor. Post-translationally, formation of the three residue Trp-Tyr-Met cross-link is important for the catalase, but not the peroxidase activity of the enzyme.

The enzyme catalyses H2O2 + AH2 = A + 2 H2O. The catalysed reaction is 2 H2O2 = O2 + 2 H2O. Bifunctional enzyme with both catalase and broad-spectrum peroxidase activity. This chain is Catalase-peroxidase, found in Nitrobacter hamburgensis (strain DSM 10229 / NCIMB 13809 / X14).